We begin with the raw amino-acid sequence, 151 residues long: ATP synthase subunit b' (151 aa).

The chain crosses the membrane as a helical span at residues 18–38 (TLPLMALQVVLLTFILNALFF).

It belongs to the ATPase B chain family. In terms of assembly, F-type ATPases have 2 components, F(1) - the catalytic core - and F(0) - the membrane proton channel. F(1) has five subunits: alpha(3), beta(3), gamma(1), delta(1), epsilon(1). F(0) has four main subunits: a(1), b(1), b'(1) and c(10-14). The alpha and beta chains form an alternating ring which encloses part of the gamma chain. F(1) is attached to F(0) by a central stalk formed by the gamma and epsilon chains, while a peripheral stalk is formed by the delta, b and b' chains.

The protein localises to the cellular thylakoid membrane. F(1)F(0) ATP synthase produces ATP from ADP in the presence of a proton or sodium gradient. F-type ATPases consist of two structural domains, F(1) containing the extramembraneous catalytic core and F(0) containing the membrane proton channel, linked together by a central stalk and a peripheral stalk. During catalysis, ATP synthesis in the catalytic domain of F(1) is coupled via a rotary mechanism of the central stalk subunits to proton translocation. Its function is as follows. Component of the F(0) channel, it forms part of the peripheral stalk, linking F(1) to F(0). The b'-subunit is a diverged and duplicated form of b found in plants and photosynthetic bacteria. This is ATP synthase subunit b' from Prochlorococcus marinus (strain MIT 9303).